Consider the following 140-residue polypeptide: Mialostatin (140 aa).

Residues 1 to 18 form the signal peptide; the sequence is MAFFKSAVFLVCVVLAAA. Intrachain disulfides connect Cys90–Cys103 and Cys114–Cys134.

Belongs to the cystatin family. As to expression, expressed in midgut (at protein level).

It is found in the secreted. Inhibitor of cysteine proteinases. Inhibits several endogenous midgut digestive cysteine proteases, such as cathepsin L1, L3, B and C, but not aspartic protease cathepsin D1 and cysteine protease legumain. Inhibits proteolysis of blood proteins catalyzed by tick gut cysteine cathepsins. Inhibits host cathepsin B (CSTB), C (CTSC), H (CTSH), K (CTSK), L (CTSL) and S (CTSS). The chain is Mialostatin from Ixodes ricinus (Common tick).